We begin with the raw amino-acid sequence, 493 residues long: Involucrin (493 aa).

Disordered stretches follow at residues 1-47 (MSQQ…CQKV), 60-123 (EEKH…GQLE), and 139-493 (KRDE…GQHE). Positions 76 to 89 (EQQQPQEQELQQQH) are enriched in low complexity. Composition is skewed to basic and acidic residues over residues 90 to 116 (WEQD…REKQ), 139 to 151 (KRDE…KEQL), 161 to 174 (QLKH…HLEL), 184 to 193 (NLEHQEKPLE), and 201 to 213 (QLKH…KPLE). A compositionally biased stretch (polar residues) spans 228–240 (QEGQSELPEQQRG). 5 stretches are compositionally biased toward basic and acidic residues: residues 250-270 (GQLK…HEEG), 282-360 (KHLE…HEGQ), 372-386 (KHLE…HPEQ), 411-431 (KHLE…EQLK), and 439-450 (QLKDLEQQERQL). Positions 473–493 (GEVLLPVEQQQQKQEVQGQHE) are enriched in low complexity.

This sequence belongs to the involucrin family. In terms of assembly, directly or indirectly cross-linked to cornifelin (CNFN). In terms of processing, substrate of transglutaminase. Specific glutamines or lysines are cross-linked to keratins, desmoplakin and to inter involucrin molecules. In terms of tissue distribution, keratinocytes of epidermis and other stratified squamous epithelia.

The protein localises to the cytoplasm. Its function is as follows. Part of the insoluble cornified cell envelope (CE) of stratified squamous epithelia. The chain is Involucrin (IVL) from Saguinus oedipus (Cotton-top tamarin).